A 597-amino-acid chain; its full sequence is Serine/arginine repetitive matrix protein 3 (597 aa).

Over residues 1–31 (MSSTVNNGAASMQSTPDAANGFPQPSSSSGT) the composition is skewed to polar residues. The disordered stretch occupies residues 1–47 (MSSTVNNGAASMQSTPDAANGFPQPSSSSGTWPRAEEELRAAEPGLV). The CWF21 domain occupies 55-98 (LDHERKRRVELKCMELQEMMEEQGYSEEEIRQKVGTFRQMLMEK). Residues 99-109 (EGVLTREDRPG) show a composition bias toward basic and acidic residues. Positions 99–597 (EGVLTREDRP…GPAPLPPPAA (499 aa)) are disordered. Composition is skewed to basic residues over residues 149 to 158 (RGHRGYRTKH), 168 to 186 (PKKK…KKRR), 199 to 211 (LRKK…KHRR), and 219 to 243 (RRKR…KKRP). 2 stretches are compositionally biased toward low complexity: residues 257 to 278 (SGSS…PSRL) and 291 to 313 (SQRS…SPQR). Composition is skewed to gly residues over residues 315–328 (GGSG…GGRP) and 374–383 (GRGGRAAGGA). Positions 384–412 (GRRRRRRRRRRRSRSSASAPRRRGRRRPR) are enriched in basic residues. Low complexity-rich tracts occupy residues 417–433 (RGSS…SDSG), 466–476 (RPASTSPSPGA), and 488–507 (SSRS…SPSK). The segment covering 530 to 549 (LSRDKDGEGRARHSEAEATR) has biased composition (basic and acidic residues). The span at 550–565 (ARRRSRSYSPIRKRRR) shows a compositional bias: basic residues.

The protein belongs to the CWC21 family. In terms of tissue distribution, expressed in breast cancer cell lines.

In terms of biological role, may play a role in regulating breast cancer cell invasiveness. May be involved in RYBP-mediated breast cancer progression. The sequence is that of Serine/arginine repetitive matrix protein 3 (SRRM3) from Homo sapiens (Human).